The primary structure comprises 222 residues: Uridine diphosphate glucose pyrophosphatase NUDT14 (222 aa).

Residues 38 to 206 (KTHDSVTILM…DIPKTLGVIY (169 aa)) form the Nudix hydrolase domain. A Nudix box motif is present at residues 111–129 (PGLSLEEAACKEAWEECGY).

Belongs to the Nudix hydrolase family. Homodimer. It depends on Mg(2+) as a cofactor.

It localises to the cytoplasm. It carries out the reaction UDP-sugar + H2O = UMP + alpha-D-aldose 1-phosphate.. Hydrolyzes UDP-glucose to glucose 1-phosphate and UMP and ADP-ribose to ribose 5-phosphate and AMP. The physiological substrate is probably UDP-glucose. Poor activity on other substrates such as ADP-glucose, CDP-glucose, GDP-glucose and GDP-mannose. In Mus musculus (Mouse), this protein is Uridine diphosphate glucose pyrophosphatase NUDT14 (Nudt14).